We begin with the raw amino-acid sequence, 555 residues long: Zinc finger and SCAN domain-containing protein 21 (555 aa).

Disordered regions lie at residues 1-74 (MTKV…SKDK), 102-133 (TIKA…YHDT), 204-243 (LDEP…TQHV), and 263-354 (EEVF…RPAP). 3 tandem repeats follow at residues 18 to 56 (ESMG…QDTL), 57 to 95 (EPMG…QDTL), and 96 to 134 (EQLG…HDTP). A 3 X 39 AA approximate tandem repeats region spans residues 18–134 (ESMGPSPIKV…FRQFGYHDTP (117 aa)). Lys-26 is covalently cross-linked (Glycyl lysine isopeptide (Lys-Gly) (interchain with G-Cter in SUMO2)). The 83-residue stretch at 122 to 204 (RQRFRQFGYH…TLLEDLEQEL (83 aa)) folds into the SCAN box domain. Polar residues predominate over residues 210 to 240 (QVSSPPNEQKQSWEKMSTSGTAMESLSSTET). The span at 280–302 (PQKEDSADEHRSSEEESHADGLK) shows a compositional bias: basic and acidic residues. Glycyl lysine isopeptide (Lys-Gly) (interchain with G-Cter in SUMO2) cross-links involve residues Lys-302 and Lys-313. The segment covering 316–332 (SRSERQWANNLERERGT) has biased composition (basic and acidic residues). 7 consecutive C2H2-type zinc fingers follow at residues 359–381 (YICA…RRTH), 387–409 (YVCT…YRTH), 415–436 (YDCK…QRMH), 442–464 (YQCK…YRIH), 470–492 (YQCN…QRLH), 498–520 (YKCK…HRIH), and 526–548 (YWCS…QRVH). Lys-431 participates in a covalent cross-link: Glycyl lysine isopeptide (Lys-Gly) (interchain with G-Cter in SUMO2).

Belongs to the krueppel C2H2-type zinc-finger protein family. In terms of tissue distribution, expressed predominantly in the spermatocytes and spermatids of adult testes. It is also present at lower levels in the ovary, brain, spleen, embryo and fetus.

The protein resides in the nucleus. In terms of biological role, strong transcriptional activator. Plays an important role in spermatogenesis; essential for the progression of meiotic prophase I in spermatocytes. This chain is Zinc finger and SCAN domain-containing protein 21 (Zscan21), found in Mus musculus (Mouse).